Here is a 565-residue protein sequence, read N- to C-terminus: NAD-dependent malic enzyme (565 aa).

The active-site Proton donor is the Tyr-104. An NAD(+)-binding site is contributed by Arg-157. Lys-175 functions as the Proton acceptor in the catalytic mechanism. A divalent metal cation contacts are provided by Glu-246, Asp-247, and Asp-270. Positions 270 and 418 each coordinate NAD(+).

This sequence belongs to the malic enzymes family. In terms of assembly, homotetramer. It depends on Mg(2+) as a cofactor. Requires Mn(2+) as cofactor.

The catalysed reaction is (S)-malate + NAD(+) = pyruvate + CO2 + NADH. The enzyme catalyses oxaloacetate + H(+) = pyruvate + CO2. The protein is NAD-dependent malic enzyme of Edwardsiella ictaluri (strain 93-146).